Here is a 126-residue protein sequence, read N- to C-terminus: Protein ApaG (126 aa).

In terms of domain architecture, ApaG spans 2–126; sequence RRKPYELKVE…FSLAIPRRLH (125 aa).

This is Protein ApaG from Methylococcus capsulatus (strain ATCC 33009 / NCIMB 11132 / Bath).